A 208-amino-acid chain; its full sequence is Outer-membrane lipoprotein carrier protein (208 aa).

A signal peptide spans 1 to 22 (MKNLLCAVMLTSPLLYSTAVFA).

This sequence belongs to the LolA family. As to quaternary structure, monomer.

It is found in the periplasm. In terms of biological role, participates in the translocation of lipoproteins from the inner membrane to the outer membrane. Only forms a complex with a lipoprotein if the residue after the N-terminal Cys is not an aspartate (The Asp acts as a targeting signal to indicate that the lipoprotein should stay in the inner membrane). This Shewanella putrefaciens (strain CN-32 / ATCC BAA-453) protein is Outer-membrane lipoprotein carrier protein.